The primary structure comprises 513 residues: L-threonine dehydratase biosynthetic IlvA (513 aa).

The residue at position 61 (Lys61) is an N6-(pyridoxal phosphate)lysine. Residues Asn88, 187–191 (GGGGL), and Ser314 contribute to the pyridoxal 5'-phosphate site. ACT-like domains lie at 338 to 409 (ALLA…DLSN) and 432 to 504 (RLYS…DVTE).

Belongs to the serine/threonine dehydratase family. In terms of assembly, homotetramer. Pyridoxal 5'-phosphate serves as cofactor.

The enzyme catalyses L-threonine = 2-oxobutanoate + NH4(+). It participates in amino-acid biosynthesis; L-isoleucine biosynthesis; 2-oxobutanoate from L-threonine: step 1/1. Functionally, catalyzes the anaerobic formation of alpha-ketobutyrate and ammonia from threonine in a two-step reaction. The first step involved a dehydration of threonine and a production of enamine intermediates (aminocrotonate), which tautomerizes to its imine form (iminobutyrate). Both intermediates are unstable and short-lived. The second step is the nonenzymatic hydrolysis of the enamine/imine intermediates to form 2-ketobutyrate and free ammonia. In the low water environment of the cell, the second step is accelerated by RidA. The chain is L-threonine dehydratase biosynthetic IlvA (ilvA) from Pasteurella multocida (strain Pm70).